We begin with the raw amino-acid sequence, 235 residues long: 1-(5-phosphoribosyl)-5-[(5-phosphoribosylamino)methylideneamino] imidazole-4-carboxamide isomerase (235 aa).

Asp-8 acts as the Proton acceptor in catalysis. Asp-127 acts as the Proton donor in catalysis.

The protein belongs to the HisA/HisF family.

It localises to the cytoplasm. It carries out the reaction 1-(5-phospho-beta-D-ribosyl)-5-[(5-phospho-beta-D-ribosylamino)methylideneamino]imidazole-4-carboxamide = 5-[(5-phospho-1-deoxy-D-ribulos-1-ylimino)methylamino]-1-(5-phospho-beta-D-ribosyl)imidazole-4-carboxamide. Its pathway is amino-acid biosynthesis; L-histidine biosynthesis; L-histidine from 5-phospho-alpha-D-ribose 1-diphosphate: step 4/9. In Aliarcobacter butzleri (strain RM4018) (Arcobacter butzleri), this protein is 1-(5-phosphoribosyl)-5-[(5-phosphoribosylamino)methylideneamino] imidazole-4-carboxamide isomerase.